The sequence spans 113 residues: Ribosome-binding factor A (113 aa).

Belongs to the RbfA family. In terms of assembly, monomer. Binds 30S ribosomal subunits, but not 50S ribosomal subunits or 70S ribosomes.

It localises to the cytoplasm. Its function is as follows. One of several proteins that assist in the late maturation steps of the functional core of the 30S ribosomal subunit. Associates with free 30S ribosomal subunits (but not with 30S subunits that are part of 70S ribosomes or polysomes). Required for efficient processing of 16S rRNA. May interact with the 5'-terminal helix region of 16S rRNA. The sequence is that of Ribosome-binding factor A from Oceanobacillus iheyensis (strain DSM 14371 / CIP 107618 / JCM 11309 / KCTC 3954 / HTE831).